A 544-amino-acid polypeptide reads, in one-letter code: Methionine--tRNA ligase (544 aa).

A 'HIGH' region motif is present at residues 10–20 (PYANGSLHLGH). Zn(2+)-binding residues include cysteine 141, cysteine 144, cysteine 153, and cysteine 156. Residues 329-333 (KLSTS) carry the 'KMSKS' region motif. Threonine 332 serves as a coordination point for ATP.

The protein belongs to the class-I aminoacyl-tRNA synthetase family. MetG type 1 subfamily. As to quaternary structure, monomer. It depends on Zn(2+) as a cofactor.

It is found in the cytoplasm. It catalyses the reaction tRNA(Met) + L-methionine + ATP = L-methionyl-tRNA(Met) + AMP + diphosphate. In terms of biological role, is required not only for elongation of protein synthesis but also for the initiation of all mRNA translation through initiator tRNA(fMet) aminoacylation. This chain is Methionine--tRNA ligase, found in Bacillus mycoides (strain KBAB4) (Bacillus weihenstephanensis).